The sequence spans 100 residues: Probable antitoxin MazE4 (100 aa).

Residues 77–100 (PYESEAERSAARARRNARQQRSAQ) form a disordered region.

Forms a complex with cognate toxin MazF4.

Antitoxin component of a type II toxin-antitoxin (TA) system. Labile antitoxin that binds to cognate MazF4 toxin and counteracts its endoribonuclease activity. The sequence is that of Probable antitoxin MazE4 (mazE4) from Mycobacterium tuberculosis (strain CDC 1551 / Oshkosh).